The chain runs to 130 residues: Small ribosomal subunit protein uS9 (130 aa).

Residues 98–130 (LKRAGFLTRDARKKERKKYGQPGARKRFQYSKR) form a disordered region. The segment covering 111-130 (KERKKYGQPGARKRFQYSKR) has biased composition (basic residues).

The protein belongs to the universal ribosomal protein uS9 family.

The polypeptide is Small ribosomal subunit protein uS9 (Sorangium cellulosum (strain So ce56) (Polyangium cellulosum (strain So ce56))).